Reading from the N-terminus, the 491-residue chain is Probable CtpA-like serine protease (491 aa).

The interval methionine 1–lysine 22 is disordered. Residues histidine 8–lysine 22 are compositionally biased toward polar residues. Residues leucine 31–valine 51 form a helical membrane-spanning segment. The region spanning threonine 119 to glycine 201 is the PDZ domain. Active-site charge relay system residues include serine 324, aspartate 335, and lysine 349.

This sequence belongs to the peptidase S41A family.

It is found in the cell membrane. The protein is Probable CtpA-like serine protease of Staphylococcus epidermidis (strain ATCC 12228 / FDA PCI 1200).